Here is a 297-residue protein sequence, read N- to C-terminus: Protease HtpX homolog (297 aa).

2 helical membrane-spanning segments follow: residues 14–34 and 38–58; these read IVLL…VGYL and SLET…IIMV. His144 serves as a coordination point for Zn(2+). Residue Glu145 is part of the active site. Residue His148 coordinates Zn(2+). A run of 2 helical transmembrane segments spans residues 159-179 and 199-219; these read IALA…NWWF and ILLL…AAAI. A Zn(2+)-binding site is contributed by Glu228.

Belongs to the peptidase M48B family. Zn(2+) is required as a cofactor.

The protein resides in the cell membrane. The sequence is that of Protease HtpX homolog from Leuconostoc mesenteroides subsp. mesenteroides (strain ATCC 8293 / DSM 20343 / BCRC 11652 / CCM 1803 / JCM 6124 / NCDO 523 / NBRC 100496 / NCIMB 8023 / NCTC 12954 / NRRL B-1118 / 37Y).